The sequence spans 81 residues: Photosystem I iron-sulfur center (81 aa).

2 consecutive 4Fe-4S ferredoxin-type domains span residues 2-31 and 39-68; these read SHSVKIYDTCIGCTQCVRACPTDVLEMIPW and IASAPRTEDCVGCKRCESACPTDFLSVRVY. Residues C11, C14, C17, C21, C48, C51, C54, and C58 each contribute to the [4Fe-4S] cluster site.

In terms of assembly, the eukaryotic PSI reaction center is composed of at least 11 subunits. Requires [4Fe-4S] cluster as cofactor.

Its subcellular location is the plastid. It is found in the chloroplast thylakoid membrane. The catalysed reaction is reduced [plastocyanin] + hnu + oxidized [2Fe-2S]-[ferredoxin] = oxidized [plastocyanin] + reduced [2Fe-2S]-[ferredoxin]. In terms of biological role, apoprotein for the two 4Fe-4S centers FA and FB of photosystem I (PSI); essential for photochemical activity. FB is the terminal electron acceptor of PSI, donating electrons to ferredoxin. The C-terminus interacts with PsaA/B/D and helps assemble the protein into the PSI complex. Required for binding of PsaD and PsaE to PSI. PSI is a plastocyanin-ferredoxin oxidoreductase, converting photonic excitation into a charge separation, which transfers an electron from the donor P700 chlorophyll pair to the spectroscopically characterized acceptors A0, A1, FX, FA and FB in turn. In Helianthus annuus (Common sunflower), this protein is Photosystem I iron-sulfur center.